The chain runs to 205 residues: Ribosomal RNA small subunit methyltransferase G (205 aa).

S-adenosyl-L-methionine-binding positions include Gly-70, Leu-75, 121–122 (IE), and Arg-136.

The protein belongs to the methyltransferase superfamily. RNA methyltransferase RsmG family.

It is found in the cytoplasm. It catalyses the reaction guanosine(527) in 16S rRNA + S-adenosyl-L-methionine = N(7)-methylguanosine(527) in 16S rRNA + S-adenosyl-L-homocysteine. Functionally, specifically methylates the N7 position of guanine in position 527 of 16S rRNA. In Methylococcus capsulatus (strain ATCC 33009 / NCIMB 11132 / Bath), this protein is Ribosomal RNA small subunit methyltransferase G.